Here is a 548-residue protein sequence, read N- to C-terminus: Probable malate:quinone oxidoreductase (548 aa).

Residues 521–548 (DKPQAADSTPKPQLKPQPVQKEVADIAL) are disordered. Positions 530-541 (PKPQLKPQPVQK) are enriched in low complexity.

This sequence belongs to the MQO family. FAD is required as a cofactor.

The catalysed reaction is (S)-malate + a quinone = a quinol + oxaloacetate. It participates in carbohydrate metabolism; tricarboxylic acid cycle; oxaloacetate from (S)-malate (quinone route): step 1/1. The sequence is that of Probable malate:quinone oxidoreductase from Escherichia coli (strain UTI89 / UPEC).